We begin with the raw amino-acid sequence, 1073 residues long: 3-hydroxy-3-methylglutaryl-coenzyme A reductase 1 (1073 aa).

A run of 8 helical transmembrane segments spans residues 23 to 43 (FMVV…DDYI), 181 to 201 (FDIL…IKVF), 211 to 231 (FWLA…ALLV), 298 to 318 (HLVV…LTGL), 326 to 346 (SLIL…ILGL), 399 to 419 (IAYF…FWLG), 459 to 479 (GTVV…MVQL), and 498 to 518 (IISK…VYFL). Positions 182–346 (DILLIFVAYL…YTFFSAILGL (165 aa)) constitute an SSD domain. The span at 542–565 (SSVTATTTTTATGTTSSGAATSKT) shows a compositional bias: low complexity. The disordered stretch occupies residues 542-589 (SSVTATTTTTATGTTSSGAATSKTIGNNKGLKSVQEIPDNEDESSDEE). The span at 579–589 (PDNEDESSDEE) shows a compositional bias: acidic residues. The active-site Charge relay system is the Glu714. 720 to 726 (STMRGCK) lines the CoA pocket. NADP(+)-binding positions include 781–783 (SRF) and 808–816 (DAMGMNMIS). The Charge relay system role is filled by Lys848. 877 to 879 (VLK) is a binding site for CoA. Residue Asp924 is the Charge relay system of the active site. Residues 997-1017 (IVASAVLAAELSLCSALAAGH) traverse the membrane as a helical segment. 1021-1022 (SH) is a CoA binding site. Catalysis depends on His1022, which acts as the Proton donor. Residues 1025 to 1056 (HNRSKAPAAGATTTTTPAITDSKASNGSIASN) are disordered. 1026 to 1027 (NR) is a binding site for NADP(+). Over residues 1030-1042 (APAAGATTTTTPA) the composition is skewed to low complexity. Positions 1046–1055 (SKASNGSIAS) are enriched in polar residues.

The protein belongs to the HMG-CoA reductase family.

The protein localises to the endoplasmic reticulum membrane. The enzyme catalyses (R)-mevalonate + 2 NADP(+) + CoA = (3S)-3-hydroxy-3-methylglutaryl-CoA + 2 NADPH + 2 H(+). Its pathway is metabolic intermediate biosynthesis; (R)-mevalonate biosynthesis; (R)-mevalonate from acetyl-CoA: step 3/3. In terms of biological role, HMG-CoA reductase; part of the first module of ergosterol biosynthesis pathway that includes the early steps of the pathway, conserved across all eukaryotes, and which results in the formation of mevalonate from acetyl-coenzyme A (acetyl-CoA). HMG1 catalyzes the reduction of hydroxymethylglutaryl-CoA (HMG-CoA) to mevalonate. The first module starts with the action of the cytosolic acetyl-CoA acetyltransferase ERG10 that catalyzes the formation of acetoacetyl-CoA. The hydroxymethylglutaryl-CoA synthase ERG13 then condenses acetyl-CoA with acetoacetyl-CoA to form HMG-CoA. The 3-hydroxy-3-methylglutaryl-coenzyme A (HMG-CoA) reductase HMG1 finally reduces HMG-CoA to produce mevalonate. This is 3-hydroxy-3-methylglutaryl-coenzyme A reductase 1 from Candida albicans (strain SC5314 / ATCC MYA-2876) (Yeast).